The sequence spans 160 residues: Cyclic pyranopterin monophosphate synthase (160 aa).

Substrate contacts are provided by residues 74-76 and 112-113; these read LSH and ME. D127 is a catalytic residue.

This sequence belongs to the MoaC family. Homohexamer; trimer of dimers.

The enzyme catalyses (8S)-3',8-cyclo-7,8-dihydroguanosine 5'-triphosphate = cyclic pyranopterin phosphate + diphosphate. Its pathway is cofactor biosynthesis; molybdopterin biosynthesis. In terms of biological role, catalyzes the conversion of (8S)-3',8-cyclo-7,8-dihydroguanosine 5'-triphosphate to cyclic pyranopterin monophosphate (cPMP). This chain is Cyclic pyranopterin monophosphate synthase, found in Geotalea uraniireducens (strain Rf4) (Geobacter uraniireducens).